The chain runs to 452 residues: Isocitrate dehydrogenase [NADP], mitochondrial (452 aa).

The N-terminal 39 residues, 1 to 39 (MAGYLRVVRSLCRASGSRPAWAPAALTAPTSQEQPRRHY), are a transit peptide targeting the mitochondrion. Lys45, Lys48, Lys67, and Lys69 each carry N6-acetyllysine. 2 positions are modified to N6-acetyllysine; alternate: Lys80 and Lys106. 2 positions are modified to N6-succinyllysine; alternate: Lys80 and Lys106. NADP(+) is bound by residues 115–117 (TIT) and Arg122. Thr117 serves as a coordination point for D-threo-isocitrate. Residues 134-140 (SPNGTIR) and Arg149 each bind D-threo-isocitrate. Lys155 is modified (N6-acetyllysine). At Lys166 the chain carries N6-acetyllysine; alternate. Lys166 is modified (N6-succinyllysine; alternate). Residue Arg172 coordinates D-threo-isocitrate. An N6-acetyllysine; alternate mark is found at Lys180 and Lys193. Lys180 and Lys193 each carry N6-succinyllysine; alternate. N6-acetyllysine is present on Lys199. Lys256 bears the N6-acetyllysine; alternate mark. Lys256 is modified (N6-succinyllysine; alternate). 4 positions are modified to N6-acetyllysine: Lys263, Lys272, Lys275, and Lys280. Lys282 carries the post-translational modification N6-acetyllysine; alternate. N6-succinyllysine; alternate is present on Lys282. Residue Asp291 coordinates Mn(2+). Lys299 serves as a coordination point for NADP(+). Asp314 is a binding site for Mn(2+). NADP(+)-binding positions include 349 to 354 (GTVTRH) and Asn367. Lys384 bears the N6-acetyllysine; alternate mark. Lys384 carries the N6-succinyllysine; alternate modification. 3 positions are modified to N6-acetyllysine: Lys400, Lys413, and Lys442.

This sequence belongs to the isocitrate and isopropylmalate dehydrogenases family. In terms of assembly, homodimer. Mg(2+) is required as a cofactor. The cofactor is Mn(2+). Acetylation at Lys-413 dramatically reduces catalytic activity. Deacetylated by SIRT3.

Its subcellular location is the mitochondrion. The enzyme catalyses D-threo-isocitrate + NADP(+) = 2-oxoglutarate + CO2 + NADPH. Plays a role in intermediary metabolism and energy production. It may tightly associate or interact with the pyruvate dehydrogenase complex. The protein is Isocitrate dehydrogenase [NADP], mitochondrial (IDH2) of Homo sapiens (Human).